A 188-amino-acid chain; its full sequence is Elongation factor P (188 aa).

Belongs to the elongation factor P family.

It is found in the cytoplasm. It participates in protein biosynthesis; polypeptide chain elongation. Involved in peptide bond synthesis. Stimulates efficient translation and peptide-bond synthesis on native or reconstituted 70S ribosomes in vitro. Probably functions indirectly by altering the affinity of the ribosome for aminoacyl-tRNA, thus increasing their reactivity as acceptors for peptidyl transferase. This is Elongation factor P from Phytoplasma mali (strain AT).